Here is a 974-residue protein sequence, read N- to C-terminus: Bifunctional glutamine synthetase adenylyltransferase/adenylyl-removing enzyme (974 aa).

Residues 1-464 (MKNAFLKTQL…HYAALFENEQ (464 aa)) form an adenylyl removase region. The adenylyl transferase stretch occupies residues 468–974 (LEIGNLVFTG…YSIFKQVMKY (507 aa)).

This sequence belongs to the GlnE family. Mg(2+) is required as a cofactor.

It catalyses the reaction [glutamine synthetase]-O(4)-(5'-adenylyl)-L-tyrosine + phosphate = [glutamine synthetase]-L-tyrosine + ADP. It carries out the reaction [glutamine synthetase]-L-tyrosine + ATP = [glutamine synthetase]-O(4)-(5'-adenylyl)-L-tyrosine + diphosphate. Involved in the regulation of glutamine synthetase GlnA, a key enzyme in the process to assimilate ammonia. When cellular nitrogen levels are high, the C-terminal adenylyl transferase (AT) inactivates GlnA by covalent transfer of an adenylyl group from ATP to specific tyrosine residue of GlnA, thus reducing its activity. Conversely, when nitrogen levels are low, the N-terminal adenylyl removase (AR) activates GlnA by removing the adenylyl group by phosphorolysis, increasing its activity. The regulatory region of GlnE binds the signal transduction protein PII (GlnB) which indicates the nitrogen status of the cell. The protein is Bifunctional glutamine synthetase adenylyltransferase/adenylyl-removing enzyme of Bartonella henselae (strain ATCC 49882 / DSM 28221 / CCUG 30454 / Houston 1) (Rochalimaea henselae).